A 380-amino-acid chain; its full sequence is MNLILASFSLAPCFCVRFFPSNHNNLNLLFPGQRKIQVSCGGKSEVLKSDTMEPHEAETFVNKRTLYAPIEPYSSGNLKVSDVHTLYWEQSGKPDGHPVVFLHGGPGGGTAPSNRRFFDPEFYRIVLFDQRGAGKSTPHACLEENTTWDLVNDIEKLREHLKIPEWLVFGGSWGSTLALAYSQSHPDKVTGLVLRGIFLLRKKEIDWFYEGGAAAIYPDAWEEFRDLIPENERGSSLVDAYHKRLNSDDLEIQYAAARAWTKWEMMTAYLRPNLENVQKAEDDKFSLAFARIENHYFVNKGFFPSDSHLLDNVDKIRHIKTTIVQGRYDVCCPMMSAWDLHKAWPEAELKIVYDAGHSANEPGISAELVVANEKMKALMG.

One can recognise an AB hydrolase-1 domain in the interval 98–360 (PVVFLHGGPG…IVYDAGHSAN (263 aa)). Catalysis depends on serine 172, which acts as the Nucleophile. The active site involves aspartate 329. Histidine 357 serves as the catalytic Proton donor.

This sequence belongs to the peptidase S33 family.

The protein localises to the cytoplasm. It carries out the reaction Release of N-terminal proline from a peptide.. Specifically catalyzes the removal of N-terminal proline residues from peptides. This Arabidopsis thaliana (Mouse-ear cress) protein is Proline iminopeptidase (PIP).